The sequence spans 384 residues: MRVLGLMSGTSADGVDAVLVELSGSADHPRWSLLRSASLDYPTSTRQLILAVGQGEAKTASSLLNLSETITKIQAAAALQCDPEEQAQLVGCHGQTLWHRPPKRAGTGELQRGASWQMLQAPLLAQLLNRPVIFDFRAADLALGGQGAPLVPKADAALLGRTKGWRALLNLGGIANLTLIPPDAGPDRLQPVRGWDCGPANSLIDLAMEQFSEGEESCDQGGRLAETGHCDEALILRWLAEPYFQLNPPKSTGREVFGRADLTRRLRDMQGQPIANQIATLTAFSAAVVAQDLQQLSNQNHPLPIELVVAGGGSKNLTLMRELNTRCRGLRLRRSDELQLPSQSREAMVFALLAWWHHLGYPGNAPAITGAQHEVVLGVRVNPA.

Residue 9 to 16 coordinates ATP; sequence GTSADGVD.

This sequence belongs to the anhydro-N-acetylmuramic acid kinase family.

The catalysed reaction is 1,6-anhydro-N-acetyl-beta-muramate + ATP + H2O = N-acetyl-D-muramate 6-phosphate + ADP + H(+). It participates in amino-sugar metabolism; 1,6-anhydro-N-acetylmuramate degradation. Its pathway is cell wall biogenesis; peptidoglycan recycling. Its function is as follows. Catalyzes the specific phosphorylation of 1,6-anhydro-N-acetylmuramic acid (anhMurNAc) with the simultaneous cleavage of the 1,6-anhydro ring, generating MurNAc-6-P. Is required for the utilization of anhMurNAc either imported from the medium or derived from its own cell wall murein, and thus plays a role in cell wall recycling. This chain is Anhydro-N-acetylmuramic acid kinase, found in Synechococcus sp. (strain CC9311).